The following is a 408-amino-acid chain: Succinylornithine transaminase (408 aa).

The residue at position 252 (lysine 252) is an N6-(pyridoxal phosphate)lysine.

The protein belongs to the class-III pyridoxal-phosphate-dependent aminotransferase family. AstC subfamily. Pyridoxal 5'-phosphate is required as a cofactor.

It catalyses the reaction N(2)-succinyl-L-ornithine + 2-oxoglutarate = N-succinyl-L-glutamate 5-semialdehyde + L-glutamate. Its pathway is amino-acid degradation; L-arginine degradation via AST pathway; L-glutamate and succinate from L-arginine: step 3/5. Catalyzes the transamination of N(2)-succinylornithine and alpha-ketoglutarate into N(2)-succinylglutamate semialdehyde and glutamate. Can also act as an acetylornithine aminotransferase. This chain is Succinylornithine transaminase, found in Salmonella paratyphi A (strain ATCC 9150 / SARB42).